The chain runs to 396 residues: Tryptophan synthase beta chain (396 aa).

Position 88 is an N6-(pyridoxal phosphate)lysine (lysine 88).

It belongs to the TrpB family. Tetramer of two alpha and two beta chains. The cofactor is pyridoxal 5'-phosphate.

The enzyme catalyses (1S,2R)-1-C-(indol-3-yl)glycerol 3-phosphate + L-serine = D-glyceraldehyde 3-phosphate + L-tryptophan + H2O. It participates in amino-acid biosynthesis; L-tryptophan biosynthesis; L-tryptophan from chorismate: step 5/5. Functionally, the beta subunit is responsible for the synthesis of L-tryptophan from indole and L-serine. The chain is Tryptophan synthase beta chain from Shewanella baltica (strain OS185).